Here is a 177-residue protein sequence, read N- to C-terminus: Large ribosomal subunit protein uL6 (177 aa).

It belongs to the universal ribosomal protein uL6 family. Part of the 50S ribosomal subunit.

This protein binds to the 23S rRNA, and is important in its secondary structure. It is located near the subunit interface in the base of the L7/L12 stalk, and near the tRNA binding site of the peptidyltransferase center. The polypeptide is Large ribosomal subunit protein uL6 (Brucella melitensis biotype 1 (strain ATCC 23456 / CCUG 17765 / NCTC 10094 / 16M)).